The sequence spans 1173 residues: Rac guanine nucleotide exchange factor JJ (1173 aa).

Disordered regions lie at residues 1–380, 458–479, and 712–765; these read MSYE…NQTQ, KDQLVQQQNASKKKGEEDLKQM, and DDQN…QQQQ. Composition is skewed to low complexity over residues 8-23 and 35-45; these read QQQQQQQQQQQQQQQQ and QQQQHPQPQYP. Residues 50–62 are compositionally biased toward polar residues; sequence TAQSNDSQQQHYG. Composition is skewed to low complexity over residues 72–82 and 98–118; these read TTSTTQQQQQQ and QYDQYNTTNTTTPNTTQNYDY. Over residues 119-133 the composition is skewed to polar residues; that stretch reads SNTSGNRNSGQYDQY. Low complexity-rich tracts occupy residues 134–143, 153–191, and 208–219; these read TTTNTTSANT, SPTPSSYDYSTNSYYSQQQQQQPTPTVAATNNTTNTSTN, and SQTQQQHSPTSS. Positions 220–239 are enriched in polar residues; that stretch reads YDYSQVTNNTATNYDSYYQQ. Positions 240 to 258 are enriched in low complexity; it reads PTTPTSTSSSSSTTTTTTT. Positions 262–277 are enriched in basic and acidic residues; it reads SKFEKSQSLKNMDHFI. Residues 280–295 show a composition bias toward polar residues; it reads TPSNTPSATINSWDYN. The span at 296–380 shows a compositional bias: low complexity; sequence QQQPQPQQPQ…NTDTYSNQTQ (85 aa). Basic and acidic residues predominate over residues 470-479; the sequence is KKGEEDLKQM. Residues 743–765 show a composition bias toward low complexity; that stretch reads QQPQPQQEQPPQQQQQQQQQQQQ. Positions 793–822 constitute an IQ domain; the sequence is RFGDIIRVQRVSRKWLARKKFKDLVKMKLL. One can recognise a DH domain in the interval 833–1016; it reads NRFKSVNELY…KDINKYINDR (184 aa). Residues 1044–1146 form the PH domain; that stretch reads RYFVRESQCN…WLQDLSVELK (103 aa).

Functionally, GTPase-activating protein. The protein is Rac guanine nucleotide exchange factor JJ (gxcJJ) of Dictyostelium discoideum (Social amoeba).